Here is a 291-residue protein sequence, read N- to C-terminus: 3-hydroxy-5-phosphonooxypentane-2,4-dione thiolase (291 aa).

Lysine 203 acts as the Schiff-base intermediate with substrate in catalysis.

It belongs to the DeoC/FbaB aldolase family. In terms of assembly, homodecamer.

The protein localises to the cytoplasm. The enzyme catalyses dihydroxyacetone phosphate + acetyl-CoA = 3-hydroxy-2,4-dioxopentyl phosphate + CoA. Involved in the degradation of phospho-AI-2, thereby terminating induction of the lsr operon and closing the AI-2 signaling cycle. Catalyzes the transfer of an acetyl moiety from 3-hydroxy-5-phosphonooxypentane-2,4-dione to CoA to form glycerone phosphate and acetyl-CoA. The sequence is that of 3-hydroxy-5-phosphonooxypentane-2,4-dione thiolase from Yersinia pestis bv. Antiqua (strain Antiqua).